We begin with the raw amino-acid sequence, 376 residues long: Succinate--CoA ligase [ADP-forming] subunit beta (376 aa).

An ATP-grasp domain is found at 9–237 (KEIFSKYGIP…PTEEEKVEAD (229 aa)). ATP-binding positions include lysine 46, 53–55 (GRG), valine 95, and glutamate 100. Positions 192 and 206 each coordinate Mg(2+). Residues asparagine 257 and 314-316 (GIT) each bind substrate.

The protein belongs to the succinate/malate CoA ligase beta subunit family. In terms of assembly, heterotetramer of two alpha and two beta subunits. Mg(2+) is required as a cofactor.

It catalyses the reaction succinate + ATP + CoA = succinyl-CoA + ADP + phosphate. The catalysed reaction is GTP + succinate + CoA = succinyl-CoA + GDP + phosphate. It functions in the pathway carbohydrate metabolism; tricarboxylic acid cycle; succinate from succinyl-CoA (ligase route): step 1/1. Functionally, succinyl-CoA synthetase functions in the citric acid cycle (TCA), coupling the hydrolysis of succinyl-CoA to the synthesis of either ATP or GTP and thus represents the only step of substrate-level phosphorylation in the TCA. The beta subunit provides nucleotide specificity of the enzyme and binds the substrate succinate, while the binding sites for coenzyme A and phosphate are found in the alpha subunit. The chain is Succinate--CoA ligase [ADP-forming] subunit beta from Bacteroides thetaiotaomicron (strain ATCC 29148 / DSM 2079 / JCM 5827 / CCUG 10774 / NCTC 10582 / VPI-5482 / E50).